The primary structure comprises 237 residues: Phosphatidylserine decarboxylase proenzyme (237 aa).

The Schiff-base intermediate with substrate; via pyruvic acid role is filled by serine 206. Residue serine 206 is modified to Pyruvic acid (Ser); by autocatalysis.

The protein belongs to the phosphatidylserine decarboxylase family. PSD-A subfamily. Heterodimer of a large membrane-associated beta subunit and a small pyruvoyl-containing alpha subunit. Pyruvate is required as a cofactor. Post-translationally, is synthesized initially as an inactive proenzyme. Formation of the active enzyme involves a self-maturation process in which the active site pyruvoyl group is generated from an internal serine residue via an autocatalytic post-translational modification. Two non-identical subunits are generated from the proenzyme in this reaction, and the pyruvate is formed at the N-terminus of the alpha chain, which is derived from the carboxyl end of the proenzyme. The post-translation cleavage follows an unusual pathway, termed non-hydrolytic serinolysis, in which the side chain hydroxyl group of the serine supplies its oxygen atom to form the C-terminus of the beta chain, while the remainder of the serine residue undergoes an oxidative deamination to produce ammonia and the pyruvoyl prosthetic group on the alpha chain.

It is found in the cell membrane. It catalyses the reaction a 1,2-diacyl-sn-glycero-3-phospho-L-serine + H(+) = a 1,2-diacyl-sn-glycero-3-phosphoethanolamine + CO2. It functions in the pathway phospholipid metabolism; phosphatidylethanolamine biosynthesis; phosphatidylethanolamine from CDP-diacylglycerol: step 2/2. Functionally, catalyzes the formation of phosphatidylethanolamine (PtdEtn) from phosphatidylserine (PtdSer). This is Phosphatidylserine decarboxylase proenzyme from Mycobacteroides abscessus (strain ATCC 19977 / DSM 44196 / CCUG 20993 / CIP 104536 / JCM 13569 / NCTC 13031 / TMC 1543 / L948) (Mycobacterium abscessus).